The chain runs to 264 residues: MKQYLDLMKHILAEGVDKSDRTGTGTRSVFGYQMRFDLSKGFPLVSTKKCHMRSIIHELLWFLKGETNVAYLRENKVSIWDEWADENGDLGPVYGAQWRSWPTQSGDAIDQISQVIAQIKSQPDSRRLIVSAWNVGELDKMALAPCHAFFQFYVADGKLSCQLYQRSCDVFLGLPFNIASYALLTMMVAQQCDLALGDFVWTGGDTHLYSNHMEQTALQLSREPMPLPTMTILRRPESIFDYQFDDFELTNYAPHPHIKAPVAV.

Arg21 contributes to the dUMP binding site. His51 provides a ligand contact to (6R)-5,10-methylene-5,6,7,8-tetrahydrofolate. 126–127 (RR) provides a ligand contact to dUMP. Cys146 acts as the Nucleophile in catalysis. Residues 166–169 (RSCD), Asn177, and 207–209 (HLY) contribute to the dUMP site. Asp169 contributes to the (6R)-5,10-methylene-5,6,7,8-tetrahydrofolate binding site. Ala263 lines the (6R)-5,10-methylene-5,6,7,8-tetrahydrofolate pocket.

The protein belongs to the thymidylate synthase family. Bacterial-type ThyA subfamily. As to quaternary structure, homodimer.

Its subcellular location is the cytoplasm. It catalyses the reaction dUMP + (6R)-5,10-methylene-5,6,7,8-tetrahydrofolate = 7,8-dihydrofolate + dTMP. It functions in the pathway pyrimidine metabolism; dTTP biosynthesis. Functionally, catalyzes the reductive methylation of 2'-deoxyuridine-5'-monophosphate (dUMP) to 2'-deoxythymidine-5'-monophosphate (dTMP) while utilizing 5,10-methylenetetrahydrofolate (mTHF) as the methyl donor and reductant in the reaction, yielding dihydrofolate (DHF) as a by-product. This enzymatic reaction provides an intracellular de novo source of dTMP, an essential precursor for DNA biosynthesis. This is Thymidylate synthase from Shewanella baltica (strain OS155 / ATCC BAA-1091).